The primary structure comprises 76 residues: Large ribosomal subunit protein uL29 (76 aa).

Belongs to the universal ribosomal protein uL29 family.

The chain is Large ribosomal subunit protein uL29 from Corynebacterium aurimucosum (strain ATCC 700975 / DSM 44827 / CIP 107346 / CN-1) (Corynebacterium nigricans).